The sequence spans 84 residues: Exodeoxyribonuclease 7 small subunit (84 aa).

The protein belongs to the XseB family. In terms of assembly, heterooligomer composed of large and small subunits.

It is found in the cytoplasm. The enzyme catalyses Exonucleolytic cleavage in either 5'- to 3'- or 3'- to 5'-direction to yield nucleoside 5'-phosphates.. Its function is as follows. Bidirectionally degrades single-stranded DNA into large acid-insoluble oligonucleotides, which are then degraded further into small acid-soluble oligonucleotides. The sequence is that of Exodeoxyribonuclease 7 small subunit from Haemophilus influenzae (strain 86-028NP).